Here is a 504-residue protein sequence, read N- to C-terminus: UDP-N-acetylmuramoylalanine--D-glutamate ligase (504 aa).

G129–T135 provides a ligand contact to ATP.

The protein belongs to the MurCDEF family.

The protein resides in the cytoplasm. The enzyme catalyses UDP-N-acetyl-alpha-D-muramoyl-L-alanine + D-glutamate + ATP = UDP-N-acetyl-alpha-D-muramoyl-L-alanyl-D-glutamate + ADP + phosphate + H(+). It participates in cell wall biogenesis; peptidoglycan biosynthesis. Its function is as follows. Cell wall formation. Catalyzes the addition of glutamate to the nucleotide precursor UDP-N-acetylmuramoyl-L-alanine (UMA). The protein is UDP-N-acetylmuramoylalanine--D-glutamate ligase of Cupriavidus metallidurans (strain ATCC 43123 / DSM 2839 / NBRC 102507 / CH34) (Ralstonia metallidurans).